Consider the following 225-residue polypeptide: Membrane protein (225 aa).

At 1-20 the chain is on the virion surface side; it reads MSNETNCTLDFEQSVELFKE. A helical membrane pass occupies residues 21 to 41; that stretch reads YNLFITAFLLFLTIILQYGYA. The Intravirion segment spans residues 42-51; it reads TRSKFIYILK. A helical membrane pass occupies residues 52 to 72; that stretch reads MIVLWCFWPLNIAVGVISCIY. Over 73-77 the chain is Virion surface; it reads PPNTG. A helical transmembrane segment spans residues 78-98; that stretch reads GLVAAIILTVFACLSFVGYWI. Residues 99-225 are Intravirion-facing; that stretch reads QSIRLFKRCR…VATGGSSLYT (127 aa).

Belongs to the gammacoronaviruses M protein family. Homomultimer. Interacts with envelope E protein in the budding compartment of the host cell, which is located between endoplasmic reticulum and the Golgi complex. Forms a complex with HE and S proteins. Interacts with nucleocapsid N protein. This interaction probably participates in RNA packaging into the virus.

The protein resides in the virion membrane. The protein localises to the host Golgi apparatus membrane. Component of the viral envelope that plays a central role in virus morphogenesis and assembly via its interactions with other viral proteins. This chain is Membrane protein, found in Gallus gallus (Chicken).